We begin with the raw amino-acid sequence, 1712 residues long: Probable ATP-dependent RNA helicase DDX60 (1712 aa).

The 168-residue stretch at 772 to 939 (LDVVDKNESA…WLQSVKWYWK (168 aa)) folds into the Helicase ATP-binding domain. Residue 785–792 (APTSSGKT) participates in ATP binding. Positions 889 to 892 (DEVH) match the DEVH box motif. In terms of domain architecture, Helicase C-terminal spans 1226–1370 (YADQKAVDTE…HFPLSITLVL (145 aa)).

It belongs to the helicase family. In terms of assembly, interacts with EXOSC1, EXOSC4, RIGI, IFIH1/MDA5 and DHX58/LGP2. Brain, lymph node, prostate, stomach, thyroid, tongue, trachea, uterus, skeletal muscle, spleen, kidney, liver and small intestine.

It is found in the cytoplasm. It carries out the reaction ATP + H2O = ADP + phosphate + H(+). Functionally, positively regulates RIGI- and IFIH1/MDA5-dependent type I interferon and interferon inducible gene expression in response to viral infection. Binds ssRNA, dsRNA and dsDNA and can promote the binding of RIGI to dsRNA. Exhibits antiviral activity against hepatitis C virus and vesicular stomatitis virus (VSV). In Homo sapiens (Human), this protein is Probable ATP-dependent RNA helicase DDX60 (DDX60).